A 485-amino-acid polypeptide reads, in one-letter code: N-succinylglutamate 5-semialdehyde dehydrogenase (485 aa).

220–225 (GSANTG) serves as a coordination point for NAD(+). Residues Glu-243 and Cys-278 contribute to the active site.

It belongs to the aldehyde dehydrogenase family. AstD subfamily.

The catalysed reaction is N-succinyl-L-glutamate 5-semialdehyde + NAD(+) + H2O = N-succinyl-L-glutamate + NADH + 2 H(+). It participates in amino-acid degradation; L-arginine degradation via AST pathway; L-glutamate and succinate from L-arginine: step 4/5. Its function is as follows. Catalyzes the NAD-dependent reduction of succinylglutamate semialdehyde into succinylglutamate. The protein is N-succinylglutamate 5-semialdehyde dehydrogenase of Vibrio cholerae serotype O1 (strain M66-2).